The chain runs to 425 residues: MAYFIDRRLNGKNKSMVNRQRFLRRYKSQIKQSIAGAINKRSVTDVESGESVSIPNTDINEPIFHQGRGGMRHRVHPGNDHFVQNDRIERPPSGGGGSSGQGSVSQDGEGEDEFVFQISKDEYLDLLFEDLALPNLQKNQHKQLNEYKTHRSGYTSTGVLVNISVVRSLQNSLVRRTAMTAGKRRAIRLLEAELDRLANSEPVQLLEQEKIRQEIAELRQKIDRVPFIDTFDLRYKNFERRPEPSSQAVIFCLMDVSGSMDQVTKDMAKRFYILLYLFLSRTYKNVDMVYIRHHTQAKEVDEHDFFYSQETGGTIVSSALKLMEEVIKERYDPNQWNIYAAQASDGDNWADDSPLCHDLLANHLLPLVRYYSYIEITRRAHQTLWREYEDLQARFDNFAMQHIRDQEDIYPMFRELFQRQLNESR.

A disordered region spans residues 49-109 (GESVSIPNTD…GQGSVSQDGE (61 aa)). Polar residues predominate over residues 50–59 (ESVSIPNTDI). The segment covering 77–90 (PGNDHFVQNDRIER) has biased composition (basic and acidic residues).

The protein belongs to the UPF0229 family.

In Sodalis glossinidius (strain morsitans), this protein is UPF0229 protein SG1344.